A 789-amino-acid polypeptide reads, in one-letter code: DNA topoisomerase 4 subunit A (789 aa).

The Topo IIA-type catalytic domain maps to 34-499 (LPDLRDGLKP…EKQKVQDSDF (466 aa)). Residue tyrosine 122 is the O-(5'-phospho-DNA)-tyrosine intermediate of the active site.

This sequence belongs to the type II topoisomerase GyrA/ParC subunit family. ParC type 2 subfamily. As to quaternary structure, heterotetramer composed of ParC and ParE.

The protein localises to the cell membrane. It carries out the reaction ATP-dependent breakage, passage and rejoining of double-stranded DNA.. Topoisomerase IV is essential for chromosome segregation. It relaxes supercoiled DNA. Performs the decatenation events required during the replication of a circular DNA molecule. The sequence is that of DNA topoisomerase 4 subunit A from Mycoplasma pneumoniae (strain ATCC 29342 / M129 / Subtype 1) (Mycoplasmoides pneumoniae).